Consider the following 444-residue polypeptide: Acyl-CoA 6-desaturase (444 aa).

Residues 1-131 (MGKGGNQGEG…DMNLFKTNHV (131 aa)) lie on the Cytoplasmic side of the membrane. The 78-residue stretch at 18 to 95 (VPTFSWEEIQ…LKPLLIGELA (78 aa)) folds into the Cytochrome b5 heme-binding domain. The chain crosses the membrane as a helical span at residues 132 to 152 (FFLLLLAHIIALESIAWFTVF). At 153 to 157 (YFGNG) the chain is on the lumenal side. Residues 158 to 178 (WIPTLITAFVLATSQAQAGWL) form a helical membrane-spanning segment. At 179 to 264 (QHDYGHLSVY…KYLPYNHQHE (86 aa)) the chain is on the cytoplasmic side. A Histidine box-1 motif is present at residues 180 to 184 (HDYGH). Positions 217 to 221 (HFQHH) match the Histidine box-2 motif. A helical transmembrane segment spans residues 265 to 285 (YFFLIGPPLLIPMYFQYQIIM). Over 286-305 (TMIVHKNWVDLAWAVSYYIR) the chain is Lumenal. Residues 306–326 (FFITYIPFYGILGALLFLNFI) traverse the membrane as a helical segment. The Cytoplasmic portion of the chain corresponds to 327 to 444 (RFLESHWFVW…KLWLDAYLHK (118 aa)). A Histidine box-3 motif is present at residues 382–386 (QIEHH).

Belongs to the fatty acid desaturase type 1 family. As to expression, expressed in a wide array of tissues, highest expression is found in liver followed by brain, lung, heart, and retina. A lower level is found in breast tumor when compared with normal tissues; lowest levels were found in patients with poor prognostic index.

Its subcellular location is the endoplasmic reticulum membrane. The catalysed reaction is (9Z,12Z)-octadecadienoyl-CoA + 2 Fe(II)-[cytochrome b5] + O2 + 2 H(+) = (6Z,9Z,12Z)-octadecatrienoyl-CoA + 2 Fe(III)-[cytochrome b5] + 2 H2O. It carries out the reaction (9Z,12Z,15Z)-octadecatrienoyl-CoA + 2 Fe(II)-[cytochrome b5] + O2 + 2 H(+) = (6Z,9Z,12Z,15Z)-octadecatetraenoyl-CoA + 2 Fe(III)-[cytochrome b5] + 2 H2O. It catalyses the reaction hexadecanoyl-CoA + 2 Fe(II)-[cytochrome b5] + O2 + 2 H(+) = (6Z)-hexadecenoyl-CoA + 2 Fe(III)-[cytochrome b5] + 2 H2O. The enzyme catalyses (9Z,12Z,15Z,18Z,21Z)-tetracosapentaenoyl-CoA + 2 Fe(II)-[cytochrome b5] + O2 + 2 H(+) = (6Z,9Z,12Z,15Z,18Z,21Z)-tetracosahexaenoyl-CoA + 2 Fe(III)-[cytochrome b5] + 2 H2O. The catalysed reaction is (11E)-octadecenoyl-CoA + 2 Fe(II)-[cytochrome b5] + O2 + 2 H(+) = (6Z,11E)-octadecadienoyl-CoA + 2 Fe(III)-[cytochrome b5] + 2 H2O. It carries out the reaction (11Z,14Z)-eicosadienoyl-CoA + 2 Fe(II)-[cytochrome b5] + O2 + 2 H(+) = (8Z,11Z,14Z)-eicosatrienoyl-CoA + 2 Fe(III)-[cytochrome b5] + 2 H2O. It catalyses the reaction (11Z,14Z,17Z)-eicosatrienoyl-CoA + 2 Fe(II)-[cytochrome b5] + O2 + 2 H(+) = (8Z,11Z,14Z,17Z)-eicosatetraenoyl-CoA + 2 Fe(III)-[cytochrome b5] + 2 H2O. It participates in lipid metabolism; polyunsaturated fatty acid biosynthesis. Involved in the biosynthesis of highly unsaturated fatty acids (HUFA) from the essential polyunsaturated fatty acids (PUFA) linoleic acid (LA) (18:2n-6) and alpha-linolenic acid (ALA) (18:3n-3) precursors, acting as a fatty acyl-coenzyme A (CoA) desaturase that introduces a cis double bond at carbon 6 of the fatty acyl chain. Catalyzes the first and rate limiting step in this pathway which is the desaturation of LA (18:2n-6) and ALA (18:3n-3) into gamma-linoleate (GLA) (18:3n-6) and stearidonate (18:4n-3), respectively. Subsequently, in the biosynthetic pathway of HUFA n-3 series, it desaturates tetracosapentaenoate (24:5n-3) to tetracosahexaenoate (24:6n-3), which is then converted to docosahexaenoate (DHA)(22:6n-3), an important lipid for nervous system function. Desaturates hexadecanate (palmitate) to produce 6Z-hexadecenoate (sapienate), a fatty acid unique to humans and major component of human sebum, that has been implicated in the development of acne and may have potent antibacterial activity. It can also desaturate (11E)-octadecenoate (trans-vaccenoate, the predominant trans fatty acid in human milk) at carbon 6 generating (6Z,11E)-octadecadienoate. In addition to Delta-6 activity, this enzyme exhibits Delta-8 activity with slight biases toward n-3 fatty acyl-CoA substrates. This is Acyl-CoA 6-desaturase from Homo sapiens (Human).